The chain runs to 474 residues: tRNA-2-methylthio-N(6)-dimethylallyladenosine synthase (474 aa).

One can recognise an MTTase N-terminal domain in the interval 3–120 (KKLHIKTWGC…LPEMIDQIRD (118 aa)). Positions 12, 49, 83, 157, 161, and 164 each coordinate [4Fe-4S] cluster. The Radical SAM core domain maps to 143 to 375 (RADGPSAFVS…QDRITQQAMR (233 aa)). One can recognise a TRAM domain in the interval 378–441 (RQMLGTVQRI…TNSLRGTFVR (64 aa)).

Belongs to the methylthiotransferase family. MiaB subfamily. Monomer. The cofactor is [4Fe-4S] cluster.

It is found in the cytoplasm. It catalyses the reaction N(6)-dimethylallyladenosine(37) in tRNA + (sulfur carrier)-SH + AH2 + 2 S-adenosyl-L-methionine = 2-methylsulfanyl-N(6)-dimethylallyladenosine(37) in tRNA + (sulfur carrier)-H + 5'-deoxyadenosine + L-methionine + A + S-adenosyl-L-homocysteine + 2 H(+). In terms of biological role, catalyzes the methylthiolation of N6-(dimethylallyl)adenosine (i(6)A), leading to the formation of 2-methylthio-N6-(dimethylallyl)adenosine (ms(2)i(6)A) at position 37 in tRNAs that read codons beginning with uridine. The polypeptide is tRNA-2-methylthio-N(6)-dimethylallyladenosine synthase (Shewanella sediminis (strain HAW-EB3)).